Consider the following 559-residue polypeptide: Urocanate hydratase (559 aa).

NAD(+) is bound by residues 49-50 (GG), glutamine 127, 173-175 (GMG), aspartate 193, arginine 198, 239-240 (NA), 260-264 (QTSAH), 270-271 (YL), and tyrosine 319. Cysteine 407 is an active-site residue. Glycine 489 lines the NAD(+) pocket.

Belongs to the urocanase family. Requires NAD(+) as cofactor.

It localises to the cytoplasm. The catalysed reaction is 4-imidazolone-5-propanoate = trans-urocanate + H2O. It participates in amino-acid degradation; L-histidine degradation into L-glutamate; N-formimidoyl-L-glutamate from L-histidine: step 2/3. Its function is as follows. Catalyzes the conversion of urocanate to 4-imidazolone-5-propionate. The polypeptide is Urocanate hydratase (Shouchella clausii (strain KSM-K16) (Alkalihalobacillus clausii)).